A 240-amino-acid chain; its full sequence is Biosynthetic peptidoglycan transglycosylase (240 aa).

A helical membrane pass occupies residues 9 to 31; that stretch reads FLNVVKWFAIASVLLVLLFRVVP.

It belongs to the glycosyltransferase 51 family.

It localises to the cell inner membrane. The catalysed reaction is [GlcNAc-(1-&gt;4)-Mur2Ac(oyl-L-Ala-gamma-D-Glu-L-Lys-D-Ala-D-Ala)](n)-di-trans,octa-cis-undecaprenyl diphosphate + beta-D-GlcNAc-(1-&gt;4)-Mur2Ac(oyl-L-Ala-gamma-D-Glu-L-Lys-D-Ala-D-Ala)-di-trans,octa-cis-undecaprenyl diphosphate = [GlcNAc-(1-&gt;4)-Mur2Ac(oyl-L-Ala-gamma-D-Glu-L-Lys-D-Ala-D-Ala)](n+1)-di-trans,octa-cis-undecaprenyl diphosphate + di-trans,octa-cis-undecaprenyl diphosphate + H(+). It participates in cell wall biogenesis; peptidoglycan biosynthesis. In terms of biological role, peptidoglycan polymerase that catalyzes glycan chain elongation from lipid-linked precursors. This chain is Biosynthetic peptidoglycan transglycosylase, found in Pseudomonas fluorescens (strain SBW25).